Reading from the N-terminus, the 202-residue chain is Cytochrome c oxidase assembly protein CtaG (202 aa).

At 1 to 13 (MSDKAAAPKKQGR) the chain is on the cytoplasmic side. The helical; Signal-anchor for type II membrane protein transmembrane segment at 14–36 (NNGAVVLMCLSFVFGMGAMSYAA) threads the bilayer. Over 37 to 202 (VPLYRIFCQV…GGAEKVEKKL (166 aa)) the chain is Periplasmic. The tract at residues 183–202 (EGPKPLASNEGGAEKVEKKL) is disordered.

It belongs to the COX11/CtaG family.

Its subcellular location is the cell inner membrane. In terms of biological role, exerts its effect at some terminal stage of cytochrome c oxidase synthesis, probably by being involved in the insertion of the copper B into subunit I. This is Cytochrome c oxidase assembly protein CtaG from Rhizobium etli (strain CIAT 652).